Here is a 365-residue protein sequence, read N- to C-terminus: S-adenosylmethionine:tRNA ribosyltransferase-isomerase (365 aa).

It belongs to the QueA family. As to quaternary structure, monomer.

Its subcellular location is the cytoplasm. The catalysed reaction is 7-aminomethyl-7-carbaguanosine(34) in tRNA + S-adenosyl-L-methionine = epoxyqueuosine(34) in tRNA + adenine + L-methionine + 2 H(+). It participates in tRNA modification; tRNA-queuosine biosynthesis. Transfers and isomerizes the ribose moiety from AdoMet to the 7-aminomethyl group of 7-deazaguanine (preQ1-tRNA) to give epoxyqueuosine (oQ-tRNA). This Rickettsia peacockii (strain Rustic) protein is S-adenosylmethionine:tRNA ribosyltransferase-isomerase.